We begin with the raw amino-acid sequence, 191 residues long: Probable molybdenum cofactor guanylyltransferase (191 aa).

GTP is bound by residues 6–8 (LAG), lysine 18, aspartate 67, and aspartate 92. Residue aspartate 92 participates in Mg(2+) binding.

This sequence belongs to the MobA family. The cofactor is Mg(2+).

Its subcellular location is the cytoplasm. The catalysed reaction is Mo-molybdopterin + GTP + H(+) = Mo-molybdopterin guanine dinucleotide + diphosphate. Transfers a GMP moiety from GTP to Mo-molybdopterin (Mo-MPT) cofactor (Moco or molybdenum cofactor) to form Mo-molybdopterin guanine dinucleotide (Mo-MGD) cofactor. This is Probable molybdenum cofactor guanylyltransferase from Thermococcus gammatolerans (strain DSM 15229 / JCM 11827 / EJ3).